Reading from the N-terminus, the 1823-residue chain is THO complex subunit 2 (1823 aa).

Residues 935–1003 adopt a coiled-coil conformation; the sequence is NRYESEISKQ…RRRLSREKDT (69 aa). Positions 964–969 match the Nuclear localization signal motif; it reads KRKKEK. Disordered stretches follow at residues 1244-1382 and 1394-1823; these read LVGV…KDLN and ALSS…GSRE. Basic and acidic residues-rich tracts occupy residues 1272–1283, 1312–1330, and 1356–1367; these read QMLKTKPLDGRT, KSMEQKETDETPRISDENP, and AKQDFGKDDGKS. A compositionally biased stretch (polar residues) spans 1394 to 1409; that stretch reads ALSSTAANGSIATGSS. The segment covering 1432 to 1596 has biased composition (basic and acidic residues); it reads PRHEIVTSVR…EKSHPDDHFH (165 aa). Over residues 1600 to 1610 the composition is skewed to pro residues; it reads LPPPPPLPPNI. Composition is skewed to basic and acidic residues over residues 1616 to 1625, 1636 to 1648, 1655 to 1706, and 1768 to 1785; these read AAKEDLERRA, PRHEEREKRRSEE, DDAK…FEAS, and LGKEASSKMARRDPDPIA. Phosphoserine occurs at positions 1646 and 1696. Residues 1802–1816 are compositionally biased toward polar residues; the sequence is MTVNGKTTRGEQSGS.

It belongs to the THOC2 family. Component of the THO complex, which is composed of THO1, THO2, THO3, THO5, THO6 and THO7.

It is found in the nucleus. Its function is as follows. Acts as a component of the THO subcomplex of the TREX complex which is thought to couple mRNA transcription, processing and nuclear export. In Arabidopsis thaliana (Mouse-ear cress), this protein is THO complex subunit 2 (THO2).